The following is a 518-amino-acid chain: Delta(14)-sterol reductase erg24B (518 aa).

Residue Asn-36 is glycosylated (N-linked (GlcNAc...) asparagine). Helical transmembrane passes span 110–130 (VTMWVLSYYLLSLLMQVFLPG), 150–170 (AFLSAVLILSGCAVGTYLYGT), 182–202 (YVQVITANLIICTAIAIFVYL), 294–314 (IVLTTAFQAFYVLDALYMEPA), 321–341 (VIMDGFGFMLSFGDMVWVPFL), and 355–375 (ELGLSGILIVLAVTAAGYVIF). Residues Lys-382, Arg-386, Leu-409, Trp-414, and 421–422 (NY) each bind NADP(+). The chain crosses the membrane as a helical span at residues 464–484 (SRGWGMIFTYFYMIYFGVLLL). NADP(+)-binding positions include Asp-490, 494–498 (CKRKY), and Tyr-505.

Belongs to the ERG4/ERG24 family.

It is found in the endoplasmic reticulum membrane. Its pathway is steroid metabolism; ergosterol biosynthesis. In terms of biological role, delta(14)-sterol reductase; part of the third module of ergosterol biosynthesis pathway that includes the late steps of the pathway. Catalyzes the reduction of the C14=C15 double bond within 4,4,24-trimethyl ergosta-8,14,24(28)-trienolto produce 4,4-dimethylfecosterol. The third module or late pathway involves the ergosterol synthesis itself through consecutive reactions that mainly occur in the endoplasmic reticulum (ER) membrane. Firstly, the squalene synthase erg9 catalyzes the condensation of 2 farnesyl pyrophosphate moieties to form squalene, which is the precursor of all steroids. Squalene synthase is crucial for balancing the incorporation of farnesyl diphosphate (FPP) into sterol and nonsterol isoprene synthesis. Secondly, squalene is converted into lanosterol by the consecutive action of the squalene epoxidase erg1 and the lanosterol synthase erg7. Then, the delta(24)-sterol C-methyltransferase erg6 methylates lanosterol at C-24 to produce eburicol. Eburicol is the substrate of the sterol 14-alpha demethylase encoded by cyp51A and cyp51B, to yield 4,4,24-trimethyl ergosta-8,14,24(28)-trienol. The C-14 reductase erg24 then reduces the C14=C15 double bond which leads to 4,4-dimethylfecosterol. A sequence of further demethylations at C-4, involving the C-4 demethylation complex containing the C-4 methylsterol oxidases erg25A or erg25B, the sterol-4-alpha-carboxylate 3-dehydrogenase erg26 and the 3-keto-steroid reductase erg27, leads to the production of fecosterol via 4-methylfecosterol. The C-8 sterol isomerase erg2 then catalyzes the reaction which results in unsaturation at C-7 in the B ring of sterols and thus converts fecosterol to episterol. The sterol-C5-desaturase erg3B then catalyzes the introduction of a C-5 double bond in the B ring to produce 5-dehydroepisterol. The 2 other sterol-C5-desaturases, erg3A and erg3C, seem to be less important in ergosterol biosynthesis. The C-22 sterol desaturase erg5 further converts 5-dehydroepisterol into ergosta-5,7,22,24(28)-tetraen-3beta-ol by forming the C-22(23) double bond in the sterol side chain. Finally, ergosta-5,7,22,24(28)-tetraen-3beta-ol is substrate of the C-24(28) sterol reductases erg4A and erg4B to produce ergosterol. Possible alternative sterol biosynthetic pathways might exist from fecosterol to ergosterol, depending on the activities of the erg3 isoforms. The protein is Delta(14)-sterol reductase erg24B of Aspergillus fumigatus (strain ATCC MYA-4609 / CBS 101355 / FGSC A1100 / Af293) (Neosartorya fumigata).